Reading from the N-terminus, the 539-residue chain is Chaperonin GroEL (539 aa).

Residues 29-32, 86-90, Gly413, and Asp492 contribute to the ATP site; these read TLGP and DGTTT.

This sequence belongs to the chaperonin (HSP60) family. As to quaternary structure, forms a cylinder of 14 subunits composed of two heptameric rings stacked back-to-back. Interacts with the co-chaperonin GroES.

Its subcellular location is the cytoplasm. It catalyses the reaction ATP + H2O + a folded polypeptide = ADP + phosphate + an unfolded polypeptide.. In terms of biological role, together with its co-chaperonin GroES, plays an essential role in assisting protein folding. The GroEL-GroES system forms a nano-cage that allows encapsulation of the non-native substrate proteins and provides a physical environment optimized to promote and accelerate protein folding. This is Chaperonin GroEL from Fusobacterium nucleatum subsp. nucleatum (strain ATCC 25586 / DSM 15643 / BCRC 10681 / CIP 101130 / JCM 8532 / KCTC 2640 / LMG 13131 / VPI 4355).